Consider the following 106-residue polypeptide: uncharacterized protein (106 aa).

This sequence belongs to the HesB/IscA family.

This is an uncharacterized protein from Cereibacter sphaeroides (Rhodobacter sphaeroides).